The chain runs to 228 residues: MSDLAKTAQRRALRSSGSARPDEDVPAPNRRGNRLPRDERRGQLLVVASDVFVDRGYHAAGMDEIADRAGVSKPVLYQHFSSKLELYLAVLHRHVENLVSGVHQALSTTTDNRQRLHVAVQAFFDFIEHDSQGYRLIFENDFVTEPEVAAQVRVATESCIDAVFALISADSGLDPHRARMIAVGLVGMSVDCARYWLDADKPISKSDAVEGTVQFAWGGLSHVPLTRS.

The disordered stretch occupies residues 1–39; that stretch reads MSDLAKTAQRRALRSSGSARPDEDVPAPNRRGNRLPRDE. The HTH tetR-type domain maps to 38 to 98; that stretch reads DERRGQLLVV…AVLHRHVENL (61 aa). The H-T-H motif DNA-binding region spans 61 to 80; the sequence is GMDEIADRAGVSKPVLYQHF.

As to quaternary structure, homodimer.

Its activity is regulated as follows. FasR:DNA binding is regulated by long-chain acyl-CoAs (C14- to C26-CoA), which act as effector molecules that modulate the affinity of FasR for its DNA binding sequences and therefore modulate the expression of the essential fas-acpS operon. FasR activity is not affected by mycolic acid biosynthesis intermediates. Functionally, transcriptional activator that plays a central role in sensing mycobacterial long-chain fatty acids and regulating lipid biosynthesis. Activates the expression of the genes encoding the fatty acid synthase (fas) and the 4-phosphopantetheinyl transferase (acpS), whose products are involved in the fatty acid and mycolic acid biosynthesis. Specifically binds to three conserved operator sequences present in the fas-acpS promoter region. Not essential for M.tuberculosis viability, although it is required for the optimal growth in vitro and for virulence in macrophages and in a mouse model of infection. In Mycobacterium tuberculosis (strain ATCC 25618 / H37Rv), this protein is HTH-type transcriptional activator FasR.